We begin with the raw amino-acid sequence, 509 residues long: Putative thymidine phosphorylase (509 aa).

Belongs to the thymidine/pyrimidine-nucleoside phosphorylase family. Type 2 subfamily.

It carries out the reaction thymidine + phosphate = 2-deoxy-alpha-D-ribose 1-phosphate + thymine. The polypeptide is Putative thymidine phosphorylase (Bradyrhizobium sp. (strain ORS 278)).